Consider the following 175-residue polypeptide: 6,7-dimethyl-8-ribityllumazine synthase (175 aa).

5-amino-6-(D-ribitylamino)uracil is bound by residues F24, 58–60 (ALE), and 82–84 (AVI). Residue 87–88 (ET) participates in (2S)-2-hydroxy-3-oxobutyl phosphate binding. The active-site Proton donor is H90. N115 is a binding site for 5-amino-6-(D-ribitylamino)uracil. Position 129 (R129) interacts with (2S)-2-hydroxy-3-oxobutyl phosphate. The tract at residues 150–175 (ALEPEEDDEDEDDEDEDFDDEEDDGR) is disordered. Residues 152–175 (EPEEDDEDEDDEDEDFDDEEDDGR) are compositionally biased toward acidic residues.

Belongs to the DMRL synthase family.

The enzyme catalyses (2S)-2-hydroxy-3-oxobutyl phosphate + 5-amino-6-(D-ribitylamino)uracil = 6,7-dimethyl-8-(1-D-ribityl)lumazine + phosphate + 2 H2O + H(+). The protein operates within cofactor biosynthesis; riboflavin biosynthesis; riboflavin from 2-hydroxy-3-oxobutyl phosphate and 5-amino-6-(D-ribitylamino)uracil: step 1/2. Catalyzes the formation of 6,7-dimethyl-8-ribityllumazine by condensation of 5-amino-6-(D-ribitylamino)uracil with 3,4-dihydroxy-2-butanone 4-phosphate. This is the penultimate step in the biosynthesis of riboflavin. In Bordetella bronchiseptica (strain ATCC BAA-588 / NCTC 13252 / RB50) (Alcaligenes bronchisepticus), this protein is 6,7-dimethyl-8-ribityllumazine synthase.